Here is a 390-residue protein sequence, read N- to C-terminus: MWGQTNMVDKKSPLIAVSVGEASGDLLGAHLIRAIRKRCPQARLTGIGGELMKAEGFESLYDQERLAVRGFVEVVRRLPEILRIRRELVRDLLSLKPDVFVGIDAPDFNLGVAEKLKRAGIPTLHYVSPSVWAWRRERVGKIVHQVNRVLCLFPMEPQLYLDAGGRAEFVGHPMAQLMPLEDDRETARKTLGADVGIPVFALLPGSRVSEIDYMAPVFFQTALLLLERYPAARFLLPAATEATKRRLAEVLQRPEFAGLALTVTDRQSETVCRAADAVLVTSGTATLEVALCKRPMVISYKISPLTYAYVKRKIKVPHVGLPNILLGKEAVPELLQSEAKPEKLAAALADWYEHPDKVAALQQDFGALHLLLKKDTADLAARAVLEEAGC.

The protein belongs to the LpxB family.

It catalyses the reaction a lipid X + a UDP-2-N,3-O-bis[(3R)-3-hydroxyacyl]-alpha-D-glucosamine = a lipid A disaccharide + UDP + H(+). The protein operates within bacterial outer membrane biogenesis; LPS lipid A biosynthesis. Condensation of UDP-2,3-diacylglucosamine and 2,3-diacylglucosamine-1-phosphate to form lipid A disaccharide, a precursor of lipid A, a phosphorylated glycolipid that anchors the lipopolysaccharide to the outer membrane of the cell. The protein is Lipid-A-disaccharide synthase of Neisseria gonorrhoeae (strain ATCC 700825 / FA 1090).